A 158-amino-acid chain; its full sequence is MNHLGMVLQIWEQHQFYANRKKCAFGQPQIAYLGHRHIISGEGVSADPAKLEAMVGWPEPKNTTELRGFLGLTGYYRRFVKNYGKIVRPLTELLKKNSLKWTEMAALAFKALKGAVTTLPVLALPDLKLPFVTRVGKWNWSCFITREQACCVSQPRVF.

It is found in the mitochondrion. This is an uncharacterized protein from Arabidopsis thaliana (Mouse-ear cress).